Consider the following 230-residue polypeptide: MKTIGLLGGMSWESTIPYYRLINEGIKQRLGGLHSAQVLLHSVDFHEIEECQRRGEWDKTGDILAEAALGLQRAGAEGIVLCTNTMHKVADAIESRCTLPFLHIADATGRAITGAGMTRVALLGTRYTMEQDFYRGRLTEQFSINCLIPEADERAKINQIIFEELCLGQFTEASRAYYAQVIARLAEQGAQGVIFGCTEIGLLVPEERSVLPVFDTAAIHAEDAVAFMLS.

Substrate contacts are provided by residues Met10, Gln52, and Thr83–Thr85. The Proton donor role is filled by Thr83. Cys197 serves as the catalytic Proton acceptor. Thr198 to Glu199 is a substrate binding site.

This sequence belongs to the aspartate/glutamate racemases family. As to quaternary structure, homodimer.

It carries out the reaction L-glutamate = D-glutamate. The enzyme catalyses L-aspartate = D-aspartate. Exhibits racemase activity for both L-glutamate and L-aspartate. The chain is L-aspartate/glutamate-specific racemase from Escherichia coli O157:H7.